The primary structure comprises 114 residues: uncharacterized protein (114 aa).

The interval 1–114 (MSTAASSRMR…HASQSPDTAY (114 aa)) is disordered. Over residues 32–43 (CRRVPSRPCRPV) the composition is skewed to low complexity.

This is an uncharacterized protein from Human adenovirus B serotype 7 (HAdV-7).